The chain runs to 209 residues: PITH domain-containing protein 1 (209 aa).

In terms of domain architecture, PITH spans 18 to 190 (SDGPERGLEY…EVTICNYEAA (173 aa)).

This sequence belongs to the PITHD1 family.

It localises to the cytoplasm. May play a role in promoting megakaryocyte differentiation by up-regulating RUNX1 expression. The protein is PITH domain-containing protein 1 (pithd1) of Xenopus laevis (African clawed frog).